The following is a 2499-amino-acid chain: Probable polyketide synthase 23 (2499 aa).

Positions 11–430 (DNQVAIVGLG…GSNACVLLSE (420 aa)) constitute a Ketosynthase family 3 (KS3) domain. Active-site for beta-ketoacyl synthase activity residues include Cys-177, His-316, and His-354. Positions 623-656 (GITPSIIVGHSLGEVASAFCSGMIDLETACFVIY) are acyl/malonyl transferases. Ser-633 (for acyl/malonyl transferase activity) is an active-site residue. Residues 924 to 1044 (INQLGNKNEL…SRILMKSLDV (121 aa)) are N-terminal hotdog fold. The region spanning 924 to 1209 (INQLGNKNEL…IASTLSTNID (286 aa)) is the PKS/mFAS DH domain. The active-site Proton acceptor; for dehydratase activity is the His-956. The interval 1059–1209 (NWSTLKREQL…IASTLSTNID (151 aa)) is C-terminal hotdog fold. The active-site Proton donor; for dehydratase activity is the Asp-1121. A Carrier domain is found at 2414 to 2491 (EKEFSIRQDI…QIINIVTTKV (78 aa)). O-(pantetheine 4'-phosphoryl)serine is present on Ser-2451.

Pantetheine 4'-phosphate is required as a cofactor.

Probable polyketide synthase. The polypeptide is Probable polyketide synthase 23 (pks23) (Dictyostelium discoideum (Social amoeba)).